The chain runs to 357 residues: MLIFFNKYLHINLNILSYIPYRAIFSLLTSFFINLYIGPYFIYYFKKLQTYQIIRNNGPKTHYSKKNTPTMGGIFIIFSILFSTILYCNLSNIYIWYVISILIGYGLIGFIDDYKKIKYKNSQGLKLKWKYFFLSIIAFIFICMIKINNKDIISTELIIPFCIKNDFEINYLYIFLSYFVLVGTSNAVNLTDGLDGLAIMPVIFLTCGLTLISLFSDNINISHYLHVHYVKNSTELAILCMAIVGSGLGFLWFNSYPAKVFMGDVGSLALGGSLGAIAILLHQELLLIIMGGIFVFETISVILQIISFKIRKKRIFQMAPVHHHYEVKGILEPLIIVRFWIVSLILLLISLISLKVC.

Helical transmembrane passes span Ala-23 to Tyr-43, Thr-70 to Leu-90, Ser-91 to Ile-111, Leu-127 to Ile-147, Tyr-171 to Thr-191, Gly-196 to Ser-216, Leu-236 to Tyr-256, Val-260 to Leu-280, Leu-286 to Ile-306, and Leu-334 to Leu-354.

The protein belongs to the glycosyltransferase 4 family. MraY subfamily. It depends on Mg(2+) as a cofactor.

Its subcellular location is the cell inner membrane. It catalyses the reaction UDP-N-acetyl-alpha-D-muramoyl-L-alanyl-gamma-D-glutamyl-meso-2,6-diaminopimeloyl-D-alanyl-D-alanine + di-trans,octa-cis-undecaprenyl phosphate = di-trans,octa-cis-undecaprenyl diphospho-N-acetyl-alpha-D-muramoyl-L-alanyl-D-glutamyl-meso-2,6-diaminopimeloyl-D-alanyl-D-alanine + UMP. It functions in the pathway cell wall biogenesis; peptidoglycan biosynthesis. Functionally, catalyzes the initial step of the lipid cycle reactions in the biosynthesis of the cell wall peptidoglycan: transfers peptidoglycan precursor phospho-MurNAc-pentapeptide from UDP-MurNAc-pentapeptide onto the lipid carrier undecaprenyl phosphate, yielding undecaprenyl-pyrophosphoryl-MurNAc-pentapeptide, known as lipid I. The polypeptide is Phospho-N-acetylmuramoyl-pentapeptide-transferase (Buchnera aphidicola subsp. Acyrthosiphon pisum (strain 5A)).